A 639-amino-acid chain; its full sequence is Wall-associated receptor kinase-like 15 (639 aa).

A signal peptide spans 1–25; it reads MELPWLSLTTFTLSLLIYFSSTTQA. Topologically, residues 26–282 are extracellular; sequence FKRCPNCGST…KRKSCKRWSN (257 aa). N-linked (GlcNAc...) asparagine glycans are attached at residues Asn-68, Asn-115, Asn-126, Asn-141, and Asn-241. A helical membrane pass occupies residues 283 to 303; the sequence is LPLLGGLAGGVGAILIAGFIT. Residues 304–639 lie on the Cytoplasmic side of the membrane; sequence KTIVSKQNRR…KEIENILHGI (336 aa). The Protein kinase domain occupies 354–639; it reads FAKSNLLGFG…KEIENILHGI (286 aa). ATP contacts are provided by residues 360-368 and Lys-382; that span reads LGFGGFGEV. Residue Asp-484 is the Proton acceptor of the active site.

Belongs to the protein kinase superfamily. Ser/Thr protein kinase family.

Its subcellular location is the membrane. The enzyme catalyses L-seryl-[protein] + ATP = O-phospho-L-seryl-[protein] + ADP + H(+). The catalysed reaction is L-threonyl-[protein] + ATP = O-phospho-L-threonyl-[protein] + ADP + H(+). Putative serine/threonine-protein kinase that may function as a signaling receptor of extracellular matrix component. The polypeptide is Wall-associated receptor kinase-like 15 (WAKL15) (Arabidopsis thaliana (Mouse-ear cress)).